The primary structure comprises 123 residues: MKLLLLALPMLVLLPQVIPAYSGEKKCWNRSGHCRKQCKDGEAVKDTCKNLRACCVPSNEDHRQVPTTSPTPLSDSTPGSIDDILTVRFTTDYFEVSSKKDMVEESEAGWGTQTSLPDVHHSS.

The N-terminal stretch at 1–19 is a signal peptide; the sequence is MKLLLLALPMLVLLPQVIP. Intrachain disulfides connect Cys-27–Cys-54, Cys-34–Cys-48, and Cys-38–Cys-55. 2 disordered regions span residues 59–79 and 102–123; these read NEDH…STPG and MVEE…HHSS. Positions 64–123 are excised as a propeptide; sequence QVPTTSPTPLSDSTPGSIDDILTVRFTTDYFEVSSKKDMVEESEAGWGTQTSLPDVHHSS. Residues 66–79 show a composition bias toward low complexity; the sequence is PTTSPTPLSDSTPG.

It belongs to the beta-defensin family. The three-dimensional structure formed by the three intramolecular disulfide bridges is indispensable for antimicrobial activity.

It is found in the secreted. Host defense peptide that exhibits antimicrobial activity against both Gram-negative bacteria, such as E.coli and S.typhimurium, and Gram-positive bacteria, such as S.aureus and B.subtilis. Inhibits cell adhesion of E.coli on intestinal epithelial enterocytes. Causes rapid permeabilization of both the outer and inner membrane of E.coli, leading to morphological alterations on the bacterial surface. Binds to bacterial lipopolysaccharides (LPS) with high affinity, and may thereby be involved in immunoregulation through LPS neutralization. May contribute to epididymal innate immunity and protect the sperm against attack by microorganisms. The polypeptide is Defensin beta 118 (DEFB118) (Hylobates lar (Lar gibbon)).